A 109-amino-acid chain; its full sequence is Putative double-stranded DNA mimic protein Ent638_2296 (109 aa).

This sequence belongs to the putative dsDNA mimic protein family.

In terms of biological role, may act as a double-stranded DNA (dsDNA) mimic. Probably regulates the activity of a dsDNA-binding protein. In Enterobacter sp. (strain 638), this protein is Putative double-stranded DNA mimic protein Ent638_2296.